A 400-amino-acid chain; its full sequence is ATP-dependent RNA helicase fal-1 (400 aa).

Positions 26 to 54 match the Q motif motif; the sequence is PTFESMSLKESLLRGIYAYGYESPSAVQS. In terms of domain architecture, Helicase ATP-binding spans 57–227; that stretch reads IVQICKGRDT…TKFMTDPVRI (171 aa). Residue 70 to 77 coordinates ATP; the sequence is AQSGTGKT. Positions 175-178 match the DEAD box motif; sequence DEAD. The Helicase C-terminal domain occupies 238-399; the sequence is GLKQYFIAVE…EMPMNVADLI (162 aa).

This sequence belongs to the DEAD box helicase family. DDX48/FAL1 subfamily.

It localises to the nucleus. It is found in the nucleolus. It carries out the reaction ATP + H2O = ADP + phosphate + H(+). In terms of biological role, ATP-dependent RNA helicase involved in 40S ribosomal subunit biogenesis. Required for the processing and cleavage of 35S pre-rRNA at sites A0, A1, and A2, leading to mature 18S rRNA. This is ATP-dependent RNA helicase fal-1 (fal-1) from Neurospora crassa (strain ATCC 24698 / 74-OR23-1A / CBS 708.71 / DSM 1257 / FGSC 987).